Here is a 297-residue protein sequence, read N- to C-terminus: ATP phosphoribosyltransferase (297 aa).

The protein belongs to the ATP phosphoribosyltransferase family.

Its subcellular location is the cytoplasm. It carries out the reaction 1-(5-phospho-beta-D-ribosyl)-ATP + diphosphate = 5-phospho-alpha-D-ribose 1-diphosphate + ATP. Its pathway is amino-acid biosynthesis; L-histidine biosynthesis; L-histidine from 5-phospho-alpha-D-ribose 1-diphosphate: step 1/9. Functionally, catalyzes the condensation of ATP and 5-phosphoribose 1-diphosphate to form N'-(5'-phosphoribosyl)-ATP (PR-ATP). Has a crucial role in the pathway because the rate of histidine biosynthesis seems to be controlled primarily by regulation of the enzymatic activity. The polypeptide is ATP phosphoribosyltransferase (HIS1) (Eremothecium gossypii (strain ATCC 10895 / CBS 109.51 / FGSC 9923 / NRRL Y-1056) (Yeast)).